Here is a 418-residue protein sequence, read N- to C-terminus: Gamma-glutamyl phosphate reductase (418 aa).

It belongs to the gamma-glutamyl phosphate reductase family.

Its subcellular location is the cytoplasm. The catalysed reaction is L-glutamate 5-semialdehyde + phosphate + NADP(+) = L-glutamyl 5-phosphate + NADPH + H(+). It participates in amino-acid biosynthesis; L-proline biosynthesis; L-glutamate 5-semialdehyde from L-glutamate: step 2/2. Catalyzes the NADPH-dependent reduction of L-glutamate 5-phosphate into L-glutamate 5-semialdehyde and phosphate. The product spontaneously undergoes cyclization to form 1-pyrroline-5-carboxylate. The sequence is that of Gamma-glutamyl phosphate reductase from Geotalea uraniireducens (strain Rf4) (Geobacter uraniireducens).